The chain runs to 225 residues: Probable proteasome subunit beta type-6 (225 aa).

It belongs to the peptidase T1B family. In terms of assembly, the 26S proteasome consists of a 20S proteasome core and two 19S regulatory subunits. The 20S proteasome core is composed of 28 subunits that are arranged in four stacked rings, resulting in a barrel-shaped structure. The two end rings are each formed by seven alpha subunits, and the two central rings are each formed by seven beta subunits. The catalytic chamber with the active sites is on the inside of the barrel.

The protein resides in the cytoplasm. It is found in the nucleus. Non-catalytic component of the proteasome, a multicatalytic proteinase complex which is characterized by its ability to cleave peptides with Arg, Phe, Tyr, Leu, and Glu adjacent to the leaving group at neutral or slightly basic pH. The proteasome has an ATP-dependent proteolytic activity. This Schizosaccharomyces pombe (strain 972 / ATCC 24843) (Fission yeast) protein is Probable proteasome subunit beta type-6 (pam1).